The following is a 296-amino-acid chain: Elongation factor Ts (296 aa).

Residues 79 to 82 (TDFV) form an involved in Mg(2+) ion dislocation from EF-Tu region.

Belongs to the EF-Ts family.

It is found in the cytoplasm. Its function is as follows. Associates with the EF-Tu.GDP complex and induces the exchange of GDP to GTP. It remains bound to the aminoacyl-tRNA.EF-Tu.GTP complex up to the GTP hydrolysis stage on the ribosome. This chain is Elongation factor Ts, found in Paracoccus denitrificans (strain Pd 1222).